The chain runs to 285 residues: 2,3,4,5-tetrahydropyridine-2,6-dicarboxylate N-succinyltransferase (285 aa).

Substrate is bound by residues arginine 111 and aspartate 148.

The protein belongs to the transferase hexapeptide repeat family. Homotrimer.

The protein localises to the cytoplasm. The catalysed reaction is (S)-2,3,4,5-tetrahydrodipicolinate + succinyl-CoA + H2O = (S)-2-succinylamino-6-oxoheptanedioate + CoA. It participates in amino-acid biosynthesis; L-lysine biosynthesis via DAP pathway; LL-2,6-diaminopimelate from (S)-tetrahydrodipicolinate (succinylase route): step 1/3. In Sinorhizobium fredii (strain NBRC 101917 / NGR234), this protein is 2,3,4,5-tetrahydropyridine-2,6-dicarboxylate N-succinyltransferase.